The chain runs to 173 residues: Myosin light chain 5 (173 aa).

Residues 1–20 (MASRKTKKKEGGALRAQRAS) form a disordered region. EF-hand domains lie at 30–65 (TQIQ…LGKT), 100–135 (DAEE…QADK), and 136–171 (MTAE…GEEK). The Ca(2+) site is built by D43, N45, D47, and D54.

Myosin is a hexamer of 2 heavy chains and 4 light chains. As to expression, expressed in fetal skeletal muscle and retina.

This chain is Myosin light chain 5 (MYL5), found in Homo sapiens (Human).